Reading from the N-terminus, the 187-residue chain is Ribonuclease HII (187 aa).

Residues 1–187 enclose the RNase H type-2 domain; that stretch reads MIILGIDEAG…YKPVQVLLNE (187 aa). 3 residues coordinate a divalent metal cation: D7, E8, and D99.

The protein belongs to the RNase HII family. Requires Mn(2+) as cofactor. Mg(2+) serves as cofactor.

The protein localises to the cytoplasm. It catalyses the reaction Endonucleolytic cleavage to 5'-phosphomonoester.. Endonuclease that specifically degrades the RNA of RNA-DNA hybrids. The chain is Ribonuclease HII from Francisella tularensis subsp. tularensis (strain FSC 198).